Reading from the N-terminus, the 1088-residue chain is V-type proton ATPase catalytic subunit A (1088 aa).

Residue 257 to 264 (GAFGCGKT) coordinates ATP. Residues 485 to 662 (LLGTWAGIGN…LVKIAHSLGI (178 aa)) enclose the DOD-type homing endonuclease domain.

Belongs to the ATPase alpha/beta chains family. In terms of assembly, V-ATPase is a heteromultimeric enzyme composed of a peripheral catalytic V1 complex (components A to H) attached to an integral membrane V0 proton pore complex (components: a, c, c', c'', d, e, f and VOA1). In terms of processing, this protein undergoes a protein self splicing that involves a post-translational excision of the VDE intervening region (intein) followed by peptide ligation.

The protein localises to the vacuole membrane. The catalysed reaction is ATP + H2O + 4 H(+)(in) = ADP + phosphate + 5 H(+)(out). In terms of biological role, catalytic subunit of the V1 complex of vacuolar(H+)-ATPase (V-ATPase), a multisubunit enzyme composed of a peripheral complex (V1) that hydrolyzes ATP and a membrane integral complex (V0) that translocates protons. V-ATPase is responsible for acidifying and maintaining the pH of intracellular compartments. VDE is an endonuclease that can cleave at a site present in a VMA1 allele that lacks the derived endonuclease segment of the open reading frame; cleavage at this site only occurs during meiosis and initiates 'homing', a genetic event that converts a VMA1 allele lacking VDE into one that contains it. The chain is V-type proton ATPase catalytic subunit A (VMA1) from Candida tropicalis (Yeast).